Consider the following 134-residue polypeptide: Pre-histone-like nucleoprotein (134 aa).

The propeptide occupies 2–23 (AILISPTNNTGWGLGTHKLFGG). The disordered stretch occupies residues 40–62 (RASWGSKGRRRRQGRARGAPLDP). The Nuclear localization signal signature appears at 125–134 (KRKRRVRFRQ).

It belongs to the adenoviridae histone-like nucleoprotein family. Interacts with the core-capsid bridging protein; this interaction bridges the virus core to the capsid. Interacts with host NPM1; this interaction might play a role in placing the pre-histone-like nucleoprotein on the viral DNA or regulating viral gene expression. Interacts with host HMGB1; this interaction inhibits host immune response. Cleaved near the N-terminus by the viral protease during virion maturation to form the mature protein.

The protein resides in the virion. It localises to the host nucleus. It is found in the host nucleolus. Plays a role in the inhibition of host immune response within the nucleus. Interacts with cellular nucleosomes and immobilizes the host immune danger signal HMGB1 on chromatin. In turn, prevents HMGB1 release out of the cell and thus decreases inflammation. Also plays a role in the wrapping and condensation of the viral DNA. May also promote viral genome import into the nucleus. The sequence is that of Pre-histone-like nucleoprotein from Canis lupus familiaris (Dog).